The following is a 207-amino-acid chain: Large ribosomal subunit protein uL4 (207 aa).

The segment at 43–80 (RRRSGTAKSKGRSEVSGSTRKLYRQKGTGNARSGSVKS) is disordered. Residues 69 to 78 (GTGNARSGSV) are compositionally biased toward polar residues.

It belongs to the universal ribosomal protein uL4 family. As to quaternary structure, part of the 50S ribosomal subunit.

Its function is as follows. One of the primary rRNA binding proteins, this protein initially binds near the 5'-end of the 23S rRNA. It is important during the early stages of 50S assembly. It makes multiple contacts with different domains of the 23S rRNA in the assembled 50S subunit and ribosome. Functionally, forms part of the polypeptide exit tunnel. In Desulforapulum autotrophicum (strain ATCC 43914 / DSM 3382 / VKM B-1955 / HRM2) (Desulfobacterium autotrophicum), this protein is Large ribosomal subunit protein uL4.